A 252-amino-acid chain; its full sequence is Small ribosomal subunit protein uS3 (252 aa).

The region spanning 39 to 109 (IRNYVNTRLK…EVKIDVVEVV (71 aa)) is the KH type-2 domain. The span at 222–240 (MKKIRDRRNDQRSRGGRDS) shows a compositional bias: basic and acidic residues. Positions 222–252 (MKKIRDRRNDQRSRGGRDSRNKRRRRPKNTA) are disordered. A compositionally biased stretch (basic residues) spans 241–252 (RNKRRRRPKNTA).

This sequence belongs to the universal ribosomal protein uS3 family. In terms of assembly, part of the 30S ribosomal subunit. Forms a tight complex with proteins S10 and S14.

Its function is as follows. Binds the lower part of the 30S subunit head. Binds mRNA in the 70S ribosome, positioning it for translation. The chain is Small ribosomal subunit protein uS3 from Chlorobium phaeobacteroides (strain BS1).